We begin with the raw amino-acid sequence, 466 residues long: Ribulose bisphosphate carboxylase large chain (466 aa).

Residue Lys-5 is modified to N6,N6,N6-trimethyllysine. The substrate site is built by Asn-114 and Thr-164. Lys-166 (proton acceptor) is an active-site residue. A substrate-binding site is contributed by Lys-168. 3 residues coordinate Mg(2+): Lys-192, Asp-194, and Glu-195. N6-carboxylysine is present on Lys-192. His-285 functions as the Proton acceptor in the catalytic mechanism. Substrate-binding residues include Arg-286, His-318, and Ser-370.

Belongs to the RuBisCO large chain family. Type I subfamily. Heterohexadecamer of 8 large chains and 8 small chains; disulfide-linked. The disulfide link is formed within the large subunit homodimers. Requires Mg(2+) as cofactor. In terms of processing, the disulfide bond which can form in the large chain dimeric partners within the hexadecamer appears to be associated with oxidative stress and protein turnover.

The protein resides in the plastid. The protein localises to the chloroplast. It carries out the reaction 2 (2R)-3-phosphoglycerate + 2 H(+) = D-ribulose 1,5-bisphosphate + CO2 + H2O. The enzyme catalyses D-ribulose 1,5-bisphosphate + O2 = 2-phosphoglycolate + (2R)-3-phosphoglycerate + 2 H(+). RuBisCO catalyzes two reactions: the carboxylation of D-ribulose 1,5-bisphosphate, the primary event in carbon dioxide fixation, as well as the oxidative fragmentation of the pentose substrate in the photorespiration process. Both reactions occur simultaneously and in competition at the same active site. The protein is Ribulose bisphosphate carboxylase large chain of Coriaria myrtifolia (Tanner's sumac).